The sequence spans 122 residues: Large ribosomal subunit protein uL14 (122 aa).

The protein belongs to the universal ribosomal protein uL14 family. As to quaternary structure, part of the 50S ribosomal subunit. Forms a cluster with proteins L3 and L19. In the 70S ribosome, L14 and L19 interact and together make contacts with the 16S rRNA in bridges B5 and B8.

Binds to 23S rRNA. Forms part of two intersubunit bridges in the 70S ribosome. The sequence is that of Large ribosomal subunit protein uL14 from Renibacterium salmoninarum (strain ATCC 33209 / DSM 20767 / JCM 11484 / NBRC 15589 / NCIMB 2235).